Reading from the N-terminus, the 107-residue chain is Small ribosomal subunit protein uS10c (107 aa).

It belongs to the universal ribosomal protein uS10 family. Part of the 30S ribosomal subunit.

It localises to the plastid. It is found in the chloroplast. Its function is as follows. Involved in the binding of tRNA to the ribosomes. This is Small ribosomal subunit protein uS10c from Phaeodactylum tricornutum (strain CCAP 1055/1).